A 201-amino-acid polypeptide reads, in one-letter code: Small ribosomal subunit protein uS4 (201 aa).

The S4 RNA-binding domain occupies 91-151 (SRLDNVVYRA…EKSRKMVWFD (61 aa)).

Belongs to the universal ribosomal protein uS4 family. In terms of assembly, part of the 30S ribosomal subunit. Contacts protein S5. The interaction surface between S4 and S5 is involved in control of translational fidelity.

Its function is as follows. One of the primary rRNA binding proteins, it binds directly to 16S rRNA where it nucleates assembly of the body of the 30S subunit. With S5 and S12 plays an important role in translational accuracy. This chain is Small ribosomal subunit protein uS4, found in Corynebacterium kroppenstedtii (strain DSM 44385 / JCM 11950 / CIP 105744 / CCUG 35717).